The chain runs to 509 residues: Probable cytochrome P450 6a14 (509 aa).

Residue Cys454 coordinates heme.

This sequence belongs to the cytochrome P450 family. Heme is required as a cofactor.

Its subcellular location is the endoplasmic reticulum membrane. The protein resides in the microsome membrane. Its function is as follows. May be involved in the metabolism of insect hormones and in the breakdown of synthetic insecticides. This chain is Probable cytochrome P450 6a14 (Cyp6a14), found in Drosophila melanogaster (Fruit fly).